A 212-amino-acid polypeptide reads, in one-letter code: Transmembrane protein 186 (212 aa).

The Mitochondrial matrix portion of the chain corresponds to 1–78; the sequence is MAAVLRAVAR…YLSRLKVAQT (78 aa). The chain crosses the membrane as a helical span at residues 79 to 99; it reads ALTVAALPPGLYCYSQGLMPF. At 100–101 the chain is on the mitochondrial intermembrane side; that stretch reads SS. The chain crosses the membrane as a helical span at residues 102–122; that stretch reads LCLAGGVAGFALAMLCWMSHF. Over 123 to 212 the chain is Mitochondrial matrix; that stretch reads FRRLVGILYV…QVFGVLDALK (90 aa).

The protein belongs to the TMEM186 family. Part of the mitochondrial complex I assembly/MCIA complex that comprises at least the core subunits TMEM126B, NDUFAF1, ECSIT and ACAD9 and complement subunits such as COA1 and TMEM186. Interacts with MT-ND3.

It is found in the mitochondrion inner membrane. Its function is as follows. As part of the MCIA complex, required for efficient assembly of the mitochondrial complex I. This is Transmembrane protein 186 from Bos taurus (Bovine).